Consider the following 396-residue polypeptide: Cysteine desulfurase (396 aa).

Pyridoxal 5'-phosphate-binding positions include 71 to 72 (GT), Asn148, Gln176, and 196 to 198 (SGH). Lys199 is modified (N6-(pyridoxal phosphate)lysine). Thr231 is a binding site for pyridoxal 5'-phosphate. The active-site Cysteine persulfide intermediate is the Cys319. Cys319 is a binding site for [2Fe-2S] cluster.

Belongs to the class-V pyridoxal-phosphate-dependent aminotransferase family. NifS/IscS subfamily. Homodimer. It depends on pyridoxal 5'-phosphate as a cofactor.

It catalyses the reaction (sulfur carrier)-H + L-cysteine = (sulfur carrier)-SH + L-alanine. Its function is as follows. Catalyzes the removal of elemental sulfur atoms from cysteine to produce alanine. Seems to participate in the biosynthesis of the nitrogenase metalloclusters by providing the inorganic sulfur required for the Fe-S core formation. The chain is Cysteine desulfurase from Azotobacter chroococcum mcd 1.